Consider the following 259-residue polypeptide: 3-oxo-5-alpha-steroid 4-dehydrogenase 1 (259 aa).

The next 5 helical transmembrane spans lie at Leu12–Ala29, Ile86–Met106, Pro111–Gln131, Phe151–Ile171, and Tyr209–Leu229.

Belongs to the steroid 5-alpha reductase family. In terms of tissue distribution, liver and prostate (at a low level).

Its subcellular location is the microsome membrane. It is found in the endoplasmic reticulum membrane. It carries out the reaction a 3-oxo-5alpha-steroid + NADP(+) = a 3-oxo-Delta(4)-steroid + NADPH + H(+). It catalyses the reaction androst-4-ene-3,17-dione + NADPH + H(+) = 5alpha-androstan-3,17-dione + NADP(+). The enzyme catalyses 5alpha-pregnane-3,20-dione + NADP(+) = progesterone + NADPH + H(+). The catalysed reaction is 17beta-hydroxy-5alpha-androstan-3-one + NADP(+) = testosterone + NADPH + H(+). Converts testosterone into 5-alpha-dihydrotestosterone and progesterone or corticosterone into their corresponding 5-alpha-3-oxosteroids. It plays a central role in sexual differentiation and androgen physiology. This chain is 3-oxo-5-alpha-steroid 4-dehydrogenase 1, found in Homo sapiens (Human).